Consider the following 517-residue polypeptide: MNALNYLKHRFLFSKDKFWYAPFKQKQRRSIYSTFSLIVLSFIVSFFLIVAIPGIKGGTFLEIFTRLFKDRINIENFARQIAIYTLAALAFSFCMSVGVFNIGISGQMMAGANFGFMMILKVFPESFRPAFGGQIITILLMILGSVTVAMVVAALKVFFKVNEVVSAIMLNWVIVLVSAYLVGTYIKPEKTDTSQFYSIELPDAFALYNFSDVQQKYGWLTSLVIAIAAAIFIAVLMKFTVFGHKLKSTGLSVTGSQAAGYSVKKYQFLSFVISGILSGLLAAVVYTASFEKQLTFSDVGDFGITSVPITGFDGIAIGLIALNSPARIVIVSTIISFVTIGAKPAGLNAATASLVLGIMMYFAAIYNLMIYIKPWRMIVKLNISKMNEAAYDEFQNEMAANLETLSFQRFLDKQKRKHDKERMVWFDTKRFEEYQKKKQATLQTFHENSSQNLLQYWKQQLLVADVKRLTFKWDFLTFKHQQKYILRWYKGKNKKQTALENEFASLNEAISQKLEEK.

Transmembrane regions (helical) follow at residues 35–55, 81–101, 102–122, 135–155, 164–184, 223–243, 268–288, 302–322, 328–348, and 352–372; these read FSLIVLSFIVSFFLIVAIPGI, IAIYTLAALAFSFCMSVGVFN, IGISGQMMAGANFGFMMILKV, IITILLMILGSVTVAMVVAAL, VVSAIMLNWVIVLVSAYLVGT, LVIAIAAAIFIAVLMKFTVFG, FLSFVISGILSGLLAAVVYTA, FGITSVPITGFDGIAIGLIAL, IVIVSTIISFVTIGAKPAGLN, and ASLVLGIMMYFAAIYNLMIYI.

It localises to the cell membrane. This is an uncharacterized protein from Mycoplasma pneumoniae (strain ATCC 29342 / M129 / Subtype 1) (Mycoplasmoides pneumoniae).